The following is a 574-amino-acid chain: Proline--tRNA ligase (574 aa).

This sequence belongs to the class-II aminoacyl-tRNA synthetase family. ProS type 1 subfamily. As to quaternary structure, homodimer.

The protein localises to the cytoplasm. The catalysed reaction is tRNA(Pro) + L-proline + ATP = L-prolyl-tRNA(Pro) + AMP + diphosphate. Functionally, catalyzes the attachment of proline to tRNA(Pro) in a two-step reaction: proline is first activated by ATP to form Pro-AMP and then transferred to the acceptor end of tRNA(Pro). As ProRS can inadvertently accommodate and process non-cognate amino acids such as alanine and cysteine, to avoid such errors it has two additional distinct editing activities against alanine. One activity is designated as 'pretransfer' editing and involves the tRNA(Pro)-independent hydrolysis of activated Ala-AMP. The other activity is designated 'posttransfer' editing and involves deacylation of mischarged Ala-tRNA(Pro). The misacylated Cys-tRNA(Pro) is not edited by ProRS. This Teredinibacter turnerae (strain ATCC 39867 / T7901) protein is Proline--tRNA ligase.